The following is a 750-amino-acid chain: Photosystem I P700 chlorophyll a apoprotein A1 (750 aa).

8 helical membrane-spanning segments follow: residues 70–93 (VFSAHFGQLSIIFLWLSGMYFHGA), 156–179 (LYCTAIGALVFAGLMLFAGWFHYH), 195–219 (LNHHLAGLLGLGSLSWAGHQVHVSL), 291–309 (IAHHHLAIAILFLIAGHMY), 346–369 (WHAQLSLNLAMLGSLTIVVAHHMY), 385–411 (LSLFTHHMWIGGFLIVGAAAHAAIFMV), 433–455 (AIISHLNWACIFLGFHSFGLYIH), and 531–549 (FLVHHIHAFTIHVTVLILL). 2 residues coordinate [4Fe-4S] cluster: Cys-573 and Cys-582. 2 consecutive transmembrane segments (helical) span residues 589-610 (HVFLGLFWMYNAISVVIFHFSW) and 664-686 (LSAYGLFFLGAHFVWAFSLMFLF). Residue His-675 coordinates chlorophyll a'. Chlorophyll a-binding residues include Met-683 and Tyr-691. Trp-692 is a binding site for phylloquinone. The helical transmembrane segment at 724 to 744 (AVGVTHYLLGGIATTWAFFLA) threads the bilayer.

This sequence belongs to the PsaA/PsaB family. The PsaA/B heterodimer binds the P700 chlorophyll special pair and subsequent electron acceptors. PSI consists of a core antenna complex that captures photons, and an electron transfer chain that converts photonic excitation into a charge separation. The eukaryotic PSI reaction center is composed of at least 11 subunits. It depends on P700 is a chlorophyll a/chlorophyll a' dimer, A0 is one or more chlorophyll a, A1 is one or both phylloquinones and FX is a shared 4Fe-4S iron-sulfur center. as a cofactor.

The protein resides in the plastid. The protein localises to the chloroplast thylakoid membrane. The catalysed reaction is reduced [plastocyanin] + hnu + oxidized [2Fe-2S]-[ferredoxin] = oxidized [plastocyanin] + reduced [2Fe-2S]-[ferredoxin]. Functionally, psaA and PsaB bind P700, the primary electron donor of photosystem I (PSI), as well as the electron acceptors A0, A1 and FX. PSI is a plastocyanin-ferredoxin oxidoreductase, converting photonic excitation into a charge separation, which transfers an electron from the donor P700 chlorophyll pair to the spectroscopically characterized acceptors A0, A1, FX, FA and FB in turn. Oxidized P700 is reduced on the lumenal side of the thylakoid membrane by plastocyanin. The chain is Photosystem I P700 chlorophyll a apoprotein A1 from Drimys granadensis.